We begin with the raw amino-acid sequence, 116 residues long: Appetite-regulating hormone (116 aa).

Positions 1-23 (MPAPRTICSLLLLSMLWMDLAMA) are cleaved as a signal peptide. Serine 26 carries the O-decanoyl serine; alternate lipid modification. Residue serine 26 is the site of O-hexanoyl serine; alternate attachment. Serine 26 is lipidated: O-octanoyl serine; alternate. Residues 29 to 67 (SPEHQKLQRKEPKKPSGRLKPRALEGQFDPDVGSQEEGA) form a disordered region. A compositionally biased stretch (basic and acidic residues) spans 31-42 (EHQKLQRKEPKK). A propeptide spans 51–74 (ALEGQFDPDVGSQEEGAEDELEIR) (removed in mature form). The residue at position 97 (leucine 97) is a Leucine amide. A propeptide spans 98–116 (GKFLQDILWEEAEETLADE) (removed in mature form).

Belongs to the motilin family. O-octanoylated by GOAT/MBOAT4. O-octanoylation is essential for ghrelin activity. Post-translationally, amidation of Leu-97 is essential for obestatin activity.

It localises to the secreted. Functionally, ghrelin is the ligand for growth hormone secretagogue receptor type 1 (GHSR). Induces the release of growth hormone from the pituitary. Has an appetite-stimulating effect, induces adiposity and stimulates gastric acid secretion. Involved in growth regulation. In terms of biological role, obestatin may be the ligand for GPR39. May have an appetite-reducing effect resulting in decreased food intake. May reduce gastric emptying activity and jejunal motility. This is Appetite-regulating hormone (GHRL) from Capra hircus (Goat).